The sequence spans 390 residues: 3-ketoacyl-CoA thiolase (390 aa).

Cys95 (acyl-thioester intermediate) is an active-site residue. Active-site proton acceptor residues include His346 and Cys376.

Belongs to the thiolase-like superfamily. Thiolase family. As to quaternary structure, heterotetramer of two alpha chains (FadB) and two beta chains (FadA).

The protein localises to the cytoplasm. It catalyses the reaction an acyl-CoA + acetyl-CoA = a 3-oxoacyl-CoA + CoA. The protein operates within lipid metabolism; fatty acid beta-oxidation. Its function is as follows. Catalyzes the final step of fatty acid oxidation in which acetyl-CoA is released and the CoA ester of a fatty acid two carbons shorter is formed. The protein is 3-ketoacyl-CoA thiolase of Acinetobacter baumannii (strain AB307-0294).